Consider the following 83-residue polypeptide: Cytochrome b559 subunit alpha (83 aa).

Residues 21–35 (VIHSITIPSLFIAGW) traverse the membrane as a helical segment. Histidine 23 lines the heme pocket.

It belongs to the PsbE/PsbF family. Heterodimer of an alpha subunit and a beta subunit. PSII is composed of 1 copy each of membrane proteins PsbA, PsbB, PsbC, PsbD, PsbE, PsbF, PsbH, PsbI, PsbJ, PsbK, PsbL, PsbM, PsbT, PsbX, PsbY, PsbZ, Psb30/Ycf12, at least 3 peripheral proteins of the oxygen-evolving complex and a large number of cofactors. It forms dimeric complexes. Requires heme b as cofactor.

It is found in the plastid. The protein localises to the chloroplast thylakoid membrane. This b-type cytochrome is tightly associated with the reaction center of photosystem II (PSII). PSII is a light-driven water:plastoquinone oxidoreductase that uses light energy to abstract electrons from H(2)O, generating O(2) and a proton gradient subsequently used for ATP formation. It consists of a core antenna complex that captures photons, and an electron transfer chain that converts photonic excitation into a charge separation. This is Cytochrome b559 subunit alpha from Marchantia polymorpha (Common liverwort).